The primary structure comprises 249 residues: MSGTILITGATSGFGQATARRFVKEGWKVIGTGRRAERLEALAAELGQAFHGIAFDITDEDATEKALAALPDGFRDIDILVNNAGLALGTAPAPQVALKDWQTMVDTNITGLLNITHHLLPTLIKQKGIVVNLSSVAAHYPYLGGNVYGGTKAFLRQFSLGLRSDLHGKGVRVTSIEPGMCETEFTLVRTGGNQEASDNLYKGVNPITADDIANTIYWVASQPKHININSLELMPVNQSFAGFQVYRES.

6–30 is an NADP(+) binding site; it reads LITGATSGFGQATARRFVKEGWKVI. S135 contacts substrate. Residue Y148 is the Proton acceptor of the active site.

The protein belongs to the short-chain dehydrogenases/reductases (SDR) family. In terms of assembly, homotetramer.

The catalysed reaction is L-serine + NADP(+) = aminoacetaldehyde + CO2 + NADPH. Catalyzes the oxidation of the hydroxyl group of serine to form 2-aminomalonate semialdehyde which is spontaneously converted into 2-aminoacetaldehyde and CO(2). Also acts on D-serine, L-glycerate, D-glycerate and 2-methyl-DL-serine. Does not act on O-methyl-DL-serine and L-threonine. The chain is Serine 3-dehydrogenase (sdh) from Agrobacterium fabrum (strain C58 / ATCC 33970) (Agrobacterium tumefaciens (strain C58)).